Consider the following 254-residue polypeptide: Phosphoribosylaminoimidazole-succinocarboxamide synthase (254 aa).

It belongs to the SAICAR synthetase family.

It catalyses the reaction 5-amino-1-(5-phospho-D-ribosyl)imidazole-4-carboxylate + L-aspartate + ATP = (2S)-2-[5-amino-1-(5-phospho-beta-D-ribosyl)imidazole-4-carboxamido]succinate + ADP + phosphate + 2 H(+). It functions in the pathway purine metabolism; IMP biosynthesis via de novo pathway; 5-amino-1-(5-phospho-D-ribosyl)imidazole-4-carboxamide from 5-amino-1-(5-phospho-D-ribosyl)imidazole-4-carboxylate: step 1/2. The sequence is that of Phosphoribosylaminoimidazole-succinocarboxamide synthase from Gluconacetobacter diazotrophicus (strain ATCC 49037 / DSM 5601 / CCUG 37298 / CIP 103539 / LMG 7603 / PAl5).